The chain runs to 1409 residues: DNA-directed RNA polymerase subunit beta' (1409 aa).

Cys72, Cys74, Cys87, and Cys90 together coordinate Zn(2+). The Mg(2+) site is built by Asp462, Asp464, and Asp466. Residues Cys816, Cys890, Cys897, and Cys900 each contribute to the Zn(2+) site.

Belongs to the RNA polymerase beta' chain family. The RNAP catalytic core consists of 2 alpha, 1 beta, 1 beta' and 1 omega subunit. When a sigma factor is associated with the core the holoenzyme is formed, which can initiate transcription. Mg(2+) is required as a cofactor. It depends on Zn(2+) as a cofactor.

The enzyme catalyses RNA(n) + a ribonucleoside 5'-triphosphate = RNA(n+1) + diphosphate. DNA-dependent RNA polymerase catalyzes the transcription of DNA into RNA using the four ribonucleoside triphosphates as substrates. The chain is DNA-directed RNA polymerase subunit beta' from Aromatoleum aromaticum (strain DSM 19018 / LMG 30748 / EbN1) (Azoarcus sp. (strain EbN1)).